The chain runs to 65 residues: uncharacterized protein (65 aa).

Residue Cys9 is the Nucleophile of the active site. Arg15 is an active-site residue.

It belongs to the low molecular weight phosphotyrosine protein phosphatase family.

This is an uncharacterized protein from Synechococcus sp. (strain WH8020).